The following is a 258-amino-acid chain: Pro-thyrotropin-releasing hormone-A (258 aa).

The first 22 residues, 1–22 (MKSACLIILASLVVCNLTLARG), serve as a signal peptide directing secretion. Gln78 carries the pyrrolidone carboxylic acid modification. A Proline amide modification is found at Pro80. Basic and acidic residues-rich tracts occupy residues 84–98 (YQEE…GKRE) and 107–119 (EVQK…KRED). Positions 84–124 (YQEELEKRQHPGKREEDEDEDYDEVQKRQHPGKREDEFDSF) are disordered. Gln92 is subject to Pyrrolidone carboxylic acid. Residue Pro94 is modified to Proline amide. Position 112 is a pyrrolidone carboxylic acid (Gln112). A Proline amide modification is found at Pro114. Pyrrolidone carboxylic acid is present on Gln131. Pro133 is modified (proline amide). Position 156 is a pyrrolidone carboxylic acid (Gln156). Proline amide is present on Pro158. Disordered stretches follow at residues 166–215 (YSKR…PCDV) and 236–258 (SRAE…TEQE). Pyrrolidone carboxylic acid is present on Gln170. Pro172 carries the proline amide modification. The span at 184 to 193 (GDLRELEKRQ) shows a compositional bias: basic and acidic residues. Residue Gln193 is modified to Pyrrolidone carboxylic acid. Proline amide is present on Pro195. Gln242 carries the pyrrolidone carboxylic acid modification. The residue at position 244 (Pro244) is a Proline amide.

This sequence belongs to the TRH family.

The protein localises to the secreted. Its function is as follows. Functions as a regulator of the biosynthesis of TSH in the anterior pituitary gland and as a neurotransmitter/ neuromodulator in the central and peripheral nervous systems. The sequence is that of Pro-thyrotropin-releasing hormone-A (trha) from Oncorhynchus nerka (Sockeye salmon).